The following is a 391-amino-acid chain: GDP-mannose transporter (391 aa).

Residues 1–11 (MDDKKNEDVEM) show a composition bias toward basic and acidic residues. Positions 1–28 (MDDKKNEDVEMRNFNGRSSPSQRDPFIS) are disordered. The Cytoplasmic portion of the chain corresponds to 1–44 (MDDKKNEDVEMRNFNGRSSPSQRDPFISKPGAAKRGGSSFDLSN). A helical transmembrane segment spans residues 45-65 (VTNSPGISILAYCLASISMTV). Topologically, residues 66-75 (TNKYCVSGSN) are lumenal. The helical transmembrane segment at 76 to 96 (WNLNFFYLAIQSVVCIIAIII) threads the bilayer. At 97–115 (CKQAGLITNLAPFDTKKAK) the chain is on the cytoplasmic side. A helical membrane pass occupies residues 116–138 (TWFPISLLLVGMIYTSTKALQFL). Residues 139 to 141 (SVP) are Lumenal-facing. A helical transmembrane segment spans residues 142–164 (VYTIFKNLTIIVIAYGEVLWFGG). Residues 165 to 170 (SVTPSA) lie on the Cytoplasmic side of the membrane. The chain crosses the membrane as a helical span at residues 171 to 193 (LFSFGLMVLSSVVAAWADIQHAL). At 194–209 (YGGGATQTKEAADALS) the chain is on the lumenal side. Residues 210–230 (TLNAGYAWMGMNVFCTAAYVL) form a helical membrane-spanning segment. The Cytoplasmic segment spans residues 231–245 (SMRKVIKKMNFKDWD). The chain crosses the membrane as a helical span at residues 246-266 (TMFYNNLLTIPVLFVCSFVFE). 2 N-linked (GlcNAc...) asparagine glycosylation sites follow: N267 and N272. Topologically, residues 267-284 (NWSSENLTKNFPLETRNN) are lumenal. The helical transmembrane segment at 285 to 305 (LILGMIYSGLATIFISYCSAW) threads the bilayer. The Cytoplasmic portion of the chain corresponds to 306–313 (CIRVTSST). Residues 314-336 (TYSMVGALNKLPIAVSGLVFFAA) form a helical membrane-spanning segment. The Lumenal portion of the chain corresponds to 337–339 (PVT). The helical transmembrane segment at 340-359 (FGSVSAIFIGFVSGIVYAWA) threads the bilayer. The Cytoplasmic segment spans residues 360 to 391 (KVRQNQSKGSVLPTTQPVMSASSQSNRDAAKA). The disordered stretch occupies residues 369-391 (SVLPTTQPVMSASSQSNRDAAKA).

Belongs to the TPT transporter family. SLC35D subfamily. Homooligomer.

The protein resides in the golgi apparatus membrane. The protein localises to the cytoplasmic vesicle membrane. Its subcellular location is the endoplasmic reticulum membrane. Functionally, involved in the import of GDP-mannose from the cytoplasm into the Golgi lumen. The chain is GDP-mannose transporter (vrg4) from Sclerotinia sclerotiorum (strain ATCC 18683 / 1980 / Ss-1) (White mold).